Here is a 123-residue protein sequence, read N- to C-terminus: Urotensin-2 (123 aa).

The first 20 residues, 1–20 (MDRVPFCCLLFVGLLNPLLS), serve as a signal peptide directing secretion. Residues 21 to 104 (FPVTDTGEMS…TVLSRLLART (84 aa)) constitute a propeptide that is removed on maturation. The segment at 63–91 (EAEGSLGQADPSAETPTPRGSLRKALTGQ) is disordered. Cys-117 and Cys-122 are oxidised to a cystine.

Belongs to the urotensin-2 family. As to expression, brain specific.

It localises to the secreted. Functionally, highly potent vasoconstrictor. In Rattus norvegicus (Rat), this protein is Urotensin-2 (Uts2).